The sequence spans 427 residues: NADH-quinone oxidoreductase subunit 14 (427 aa).

14 helical membrane passes run 1–21, 30–50, 57–77, 79–99, 104–124, 137–157, 172–192, 204–224, 230–250, 257–277, 280–300, 322–342, 360–380, and 400–420; these read MTLA…FVLP, LLGL…PFAF, GVSQ…VGLV, SGRF…HLLA, LLLM…LATW, FLLG…FYGA, YALA…LAPF, PTPV…AALL, PEAL…AALA, LLAY…YTGN, ALGF…AVLS, LGLA…LAGF, VLVL…GLGL, and AAVV…GLVL.

Belongs to the complex I subunit 2 family. In terms of assembly, NDH-1 is composed of 15 different subunits, Nqo1 to Nqo15. The complex has a L-shaped structure, with the hydrophobic arm (subunits Nqo7, Nqo8 and Nqo10 to Nqo14) embedded in the membrane and the hydrophilic peripheral arm (subunits Nqo1 to Nqo6, Nqo9 and Nqo15) protruding into the bacterial cytoplasm. The hydrophilic domain contains all the redox centers.

It is found in the cell inner membrane. The catalysed reaction is a quinone + NADH + 5 H(+)(in) = a quinol + NAD(+) + 4 H(+)(out). NDH-1 shuttles electrons from NADH, via FMN and iron-sulfur (Fe-S) centers, to quinones in the respiratory chain. The immediate electron acceptor for the enzyme in this species is menaquinone. Couples the redox reaction to proton translocation (for every two electrons transferred, four hydrogen ions are translocated across the cytoplasmic membrane), and thus conserves the redox energy in a proton gradient required for the synthesis of ATP. This chain is NADH-quinone oxidoreductase subunit 14 (nqo14), found in Thermus thermophilus (strain ATCC 27634 / DSM 579 / HB8).